The primary structure comprises 53 residues: ComX pheromone (53 aa).

Positions 1–46 (MQEMVGYLIKYPNVLREVMEGNACLLGVDKDQSECIINGFKGLEIY) are excised as a propeptide. The 3'-geranyl-2',N2-cyclotryptophan moiety is linked to residue Trp51.

Interacts directly with the sensor histidine kinase ComP and stimulates its activity. In terms of processing, trp-51 is modified by geranylation, which is essential for activity. Modified by the tryptophan prenyltransferase ComQ before export to the extracellular environment. The type of isoprenyl derivative differs among the different pherotypes and depends on ComX primary sequence.

The protein resides in the secreted. In terms of biological role, part of a major quorum-sensing system that regulates the development of genetic competence. Acts through the activation of the two-component regulatory system ComP/ComA composed of a sensor histidine kinase, ComP, and a response regulator, ComA. In Bacillus mojavensis, this protein is ComX pheromone.